A 388-amino-acid polypeptide reads, in one-letter code: Protein YnjB (388 aa).

The segment at 333–357 (AVWGDPSVLDPQKLPDGQRESLQSR) is disordered.

In Escherichia coli (strain K12), this protein is Protein YnjB (ynjB).